The primary structure comprises 317 residues: Olfactory receptor 2F1 (317 aa).

Residues 1-24 (MGTDNQTWVSEFILLGLSSDWDTR) are Extracellular-facing. A glycan (N-linked (GlcNAc...) asparagine) is linked at Asn5. Residues 25–48 (VSLFVLFLVMYVVTVLGNCLIVLL) traverse the membrane as a helical segment. The Cytoplasmic segment spans residues 49 to 57 (IRLDSRLHT). The helical transmembrane segment at 58–79 (PMYFFLTNLSLVDVSYATSVVP) threads the bilayer. The Extracellular segment spans residues 80–100 (QLLAHFLAEHKAIPFQSCAAQ). A disulfide bond links Cys97 and Cys189. The helical transmembrane segment at 101-120 (LFFSLALGGIEFVLLAVMAY) threads the bilayer. The Cytoplasmic segment spans residues 121-139 (DRYVAVCDALRYSAIMHGG). A helical transmembrane segment spans residues 140–160 (LCARLAITSWVSGFISSPVQT). The Extracellular portion of the chain corresponds to 161–200 (AITFQLPMCRNKFIDHISCELLAVVRLACVDTSSNEVTIM). A helical membrane pass occupies residues 201-222 (VSSIVLLMTPFCLVLLSYIQII). The Cytoplasmic portion of the chain corresponds to 223–236 (STILKIQSREGRKK). A helical membrane pass occupies residues 237–261 (AFHTCASHLTVVALCYGVAIFTYIQ). The Extracellular portion of the chain corresponds to 262–272 (PHSSPSVLQEK). A helical membrane pass occupies residues 273–292 (LFSVFYAILTPMLNPMIYSL). Residues 293–317 (RNKEVKGAWQKLLWKFSGLTSKLAT) lie on the Cytoplasmic side of the membrane.

The protein belongs to the G-protein coupled receptor 1 family.

It is found in the cell membrane. Odorant receptor. The chain is Olfactory receptor 2F1 (OR2F1) from Homo sapiens (Human).